The sequence spans 83 residues: Salivary thrombin inhibitor anophelin (83 aa).

The first 22 residues, 1 to 22 (MANKLVLISLLCVVLVAKITQA), serve as a signal peptide directing secretion. Residues 25–51 (QYAPGDEPSYDEDTDDSDKLVENDTSI) are disordered. Asn47 carries N-linked (GlcNAc...) asparagine glycosylation. Positions 54–83 (EDYAAIEASLSETFNTAADPGRRLGEGSKP) are sufficient for host thrombin inhibition. Positions 56–62 (YAAIEAS) are blocks exosite I of host thrombin. Residues 64-83 (SETFNTAADPGRRLGEGSKP) are disordered. The blocks active site cleft of host thrombin in a reverse direction compared to substrates stretch occupies residues 72 to 75 (DPGR). Positions 73–83 (PGRRLGEGSKP) are enriched in basic and acidic residues.

The protein belongs to the anophelin family. As to quaternary structure, interacts with human F2 (thrombin); the interaction results in thrombin inhibition. Salivary gland (at protein level).

The protein resides in the secreted. Increasing concentration of NaCl decreases affinity for thrombin. Its function is as follows. Salivary protein with anticoagulant activity that inhibits host thrombin (F2); binds to the proteinase in a reverse orientation (opposite to substrates). Inhibits thrombin-induced platelet aggregation. In Anopheles albimanus (New world malaria mosquito), this protein is Salivary thrombin inhibitor anophelin.